Consider the following 445-residue polypeptide: Tubulin beta-2B chain (445 aa).

The MREI motif motif lies at 1–4 (MREI). Gln11 contacts GTP. Ser40 is subject to Phosphoserine. Thr55 is modified (phosphothreonine). Lys58 is subject to N6-acetyllysine; alternate. The residue at position 58 (Lys58) is an N6-succinyllysine; alternate. Lys58 participates in a covalent cross-link: Glycyl lysine isopeptide (Lys-Gly) (interchain with G-Cter in ubiquitin); alternate. Glu69, Ser138, Gly142, Thr143, and Gly144 together coordinate GTP. Glu69 serves as a coordination point for Mg(2+). Ser172 bears the Phosphoserine; by CDK1 mark. Asn204 and Asn226 together coordinate GTP. 2 positions are modified to phosphothreonine: Thr285 and Thr290. Position 318 is an omega-N-methylarginine (Arg318). Lys324 participates in a covalent cross-link: Glycyl lysine isopeptide (Lys-Gly) (interchain with G-Cter in ubiquitin). The segment at 422-445 (YQQYQDATADEQGEFEEEEGEDEA) is disordered. Residues 429-445 (TADEQGEFEEEEGEDEA) are compositionally biased toward acidic residues. Glu438 carries the post-translational modification 5-glutamyl polyglutamate.

The protein belongs to the tubulin family. Dimer of alpha and beta chains. A typical microtubule is a hollow water-filled tube with an outer diameter of 25 nm and an inner diameter of 15 nM. Alpha-beta heterodimers associate head-to-tail to form protofilaments running lengthwise along the microtubule wall with the beta-tubulin subunit facing the microtubule plus end conferring a structural polarity. Microtubules usually have 13 protofilaments but different protofilament numbers can be found in some organisms and specialized cells. It depends on Mg(2+) as a cofactor. Some glutamate residues at the C-terminus are polyglycylated, resulting in polyglycine chains on the gamma-carboxyl group. Glycylation is mainly limited to tubulin incorporated into axonemes (cilia and flagella) whereas glutamylation is prevalent in neuronal cells, centrioles, axonemes, and the mitotic spindle. Both modifications can coexist on the same protein on adjacent residues, and lowering polyglycylation levels increases polyglutamylation, and reciprocally. The precise function of polyglycylation is still unclear. Post-translationally, some glutamate residues at the C-terminus are polyglutamylated, resulting in polyglutamate chains on the gamma-carboxyl group. Polyglutamylation plays a key role in microtubule severing by spastin (SPAST). SPAST preferentially recognizes and acts on microtubules decorated with short polyglutamate tails: severing activity by SPAST increases as the number of glutamates per tubulin rises from one to eight, but decreases beyond this glutamylation threshold. In terms of processing, phosphorylated on Ser-172 by CDK1 during the cell cycle, from metaphase to telophase, but not in interphase. This phosphorylation inhibits tubulin incorporation into microtubules.

Its subcellular location is the cytoplasm. The protein localises to the cytoskeleton. Functionally, tubulin is the major constituent of microtubules, a cylinder consisting of laterally associated linear protofilaments composed of alpha- and beta-tubulin heterodimers. Microtubules grow by the addition of GTP-tubulin dimers to the microtubule end, where a stabilizing cap forms. Below the cap, tubulin dimers are in GDP-bound state, owing to GTPase activity of alpha-tubulin. Implicated in neuronal migration. The protein is Tubulin beta-2B chain (TUBB2B) of Bos taurus (Bovine).